A 180-amino-acid chain; its full sequence is 3-hydroxyanthranilate 3,4-dioxygenase (180 aa).

Arg-44 is an O2 binding site. Fe cation contacts are provided by His-48, Glu-54, and His-92. Glu-54 serves as a coordination point for substrate. Arg-96 and Glu-106 together coordinate substrate. Cys-121, Cys-124, Cys-158, and Cys-161 together coordinate a divalent metal cation.

Belongs to the 3-HAO family. Fe(2+) serves as cofactor.

The protein resides in the cytoplasm. The catalysed reaction is 3-hydroxyanthranilate + O2 = (2Z,4Z)-2-amino-3-carboxymuconate 6-semialdehyde. It functions in the pathway cofactor biosynthesis; NAD(+) biosynthesis; quinolinate from L-kynurenine: step 3/3. Its function is as follows. Catalyzes the oxidative ring opening of 3-hydroxyanthranilate to 2-amino-3-carboxymuconate semialdehyde, which spontaneously cyclizes to quinolinate. The protein is 3-hydroxyanthranilate 3,4-dioxygenase (bna1) of Neurospora crassa (strain ATCC 24698 / 74-OR23-1A / CBS 708.71 / DSM 1257 / FGSC 987).